A 334-amino-acid chain; its full sequence is Probable fructose-bisphosphate aldolase class 1 (334 aa).

It belongs to the class I fructose-bisphosphate aldolase family.

It carries out the reaction beta-D-fructose 1,6-bisphosphate = D-glyceraldehyde 3-phosphate + dihydroxyacetone phosphate. It functions in the pathway carbohydrate degradation; glycolysis; D-glyceraldehyde 3-phosphate and glycerone phosphate from D-glucose: step 4/4. In Xanthomonas axonopodis pv. citri (strain 306), this protein is Probable fructose-bisphosphate aldolase class 1.